The chain runs to 134 residues: Large-conductance mechanosensitive channel (134 aa).

2 helical membrane-spanning segments follow: residues 16–36 (VIDL…VTAL) and 81–101 (GDFL…FIIV).

The protein belongs to the MscL family. In terms of assembly, homopentamer.

It localises to the cell inner membrane. Channel that opens in response to stretch forces in the membrane lipid bilayer. May participate in the regulation of osmotic pressure changes within the cell. The protein is Large-conductance mechanosensitive channel of Xylella fastidiosa (strain 9a5c).